The sequence spans 233 residues: MSKSTKKHSAAMTKVDRSTVYPLKTAVEVVKDTAYAKFDETVDVAVKLGVDPRHADQMVRGAVVLPNGLGKNVRVLVFAKGEKEKEALDAGADYVGADDLVAKIQEGWFEFDTAIATPDMMGVVGKIGKLLGPRGLMPNPKVGTVTFEVGRAVKESKAGKVEFRVEKAGIVHAPIGKVSFDAEKLQGNLVALVEALVKAKPSAAKGTYIKKISLSSTMGPGINLDISDVTANI.

Belongs to the universal ribosomal protein uL1 family. In terms of assembly, part of the 50S ribosomal subunit.

Functionally, binds directly to 23S rRNA. The L1 stalk is quite mobile in the ribosome, and is involved in E site tRNA release. In terms of biological role, protein L1 is also a translational repressor protein, it controls the translation of the L11 operon by binding to its mRNA. The chain is Large ribosomal subunit protein uL1 from Trichlorobacter lovleyi (strain ATCC BAA-1151 / DSM 17278 / SZ) (Geobacter lovleyi).